The chain runs to 447 residues: MREIVHLQTGQCGNQIGAAFWQTISGEHGLDGSGVYNGTSDLQLERMNVYFNEASGNKFVPRAVLVDLEPGTMDAVRAGPFGQLFRPDNFVFGQSGAGNNWAKGHYTEGAELVDQVLDVVRREAEGCDCLQGFQITHSLGGGTGAGMGTLLISKIREEFPDRMMATFSVVPSPKVSDTVVEPYNATLSVHQLVENSDETFCIDNEALYDICMRTLKLNNPSYGDLNHLVSAVMSGVTTCLRFPGQLNSDLRKLAVNMVPFPRLHFFMVGFAPLTSRGAHSFRAVTVPELTQQMFDPKNMMAASDFRNGRYLTSSAIFRGKVSMKEVEDQMRNVQNKNSSYFVEWIPNNVQTALCSIPPRGLKMSSTFVGNSTSIQELFKRVGDQFTAMFRRKAFLHWYTGEGMDEMEFTEAESNMNDLVSEYQQYQEASVSEGEEEYDEEAPLEGEE.

Gln-11, Glu-69, Ser-138, Gly-142, Thr-143, Gly-144, Asn-204, and Asn-226 together coordinate GTP. Glu-69 is a binding site for Mg(2+). The segment at 424–447 is disordered; that stretch reads QYQEASVSEGEEEYDEEAPLEGEE. Positions 432–447 are enriched in acidic residues; sequence EGEEEYDEEAPLEGEE.

This sequence belongs to the tubulin family. Dimer of alpha and beta chains. A typical microtubule is a hollow water-filled tube with an outer diameter of 25 nm and an inner diameter of 15 nM. Alpha-beta heterodimers associate head-to-tail to form protofilaments running lengthwise along the microtubule wall with the beta-tubulin subunit facing the microtubule plus end conferring a structural polarity. Microtubules usually have 13 protofilaments but different protofilament numbers can be found in some organisms and specialized cells. Mg(2+) serves as cofactor.

The protein localises to the cytoplasm. Its subcellular location is the cytoskeleton. In terms of biological role, tubulin is the major constituent of microtubules, a cylinder consisting of laterally associated linear protofilaments composed of alpha- and beta-tubulin heterodimers. Microtubules grow by the addition of GTP-tubulin dimers to the microtubule end, where a stabilizing cap forms. Below the cap, tubulin dimers are in GDP-bound state, owing to GTPase activity of alpha-tubulin. In Venturia inaequalis (Apple scab fungus), this protein is Tubulin beta chain.